The sequence spans 500 residues: Glycerol kinase (500 aa).

Threonine 11 provides a ligand contact to ADP. ATP is bound by residues threonine 11, threonine 12, and serine 13. A sn-glycerol 3-phosphate-binding site is contributed by threonine 11. Arginine 15 is a binding site for ADP. Positions 81, 82, 133, and 242 each coordinate sn-glycerol 3-phosphate. 5 residues coordinate glycerol: arginine 81, glutamate 82, tyrosine 133, aspartate 242, and glutamine 243. 2 residues coordinate ADP: threonine 264 and glycine 307. The ATP site is built by threonine 264, glycine 307, glutamine 311, and glycine 411. Glycine 411 serves as a coordination point for ADP.

The protein belongs to the FGGY kinase family.

The catalysed reaction is glycerol + ATP = sn-glycerol 3-phosphate + ADP + H(+). It participates in polyol metabolism; glycerol degradation via glycerol kinase pathway; sn-glycerol 3-phosphate from glycerol: step 1/1. Inhibited by fructose 1,6-bisphosphate (FBP). In terms of biological role, key enzyme in the regulation of glycerol uptake and metabolism. Catalyzes the phosphorylation of glycerol to yield sn-glycerol 3-phosphate. In Bradyrhizobium sp. (strain ORS 278), this protein is Glycerol kinase.